Consider the following 456-residue polypeptide: Enolase (456 aa).

Gln-169 contacts (2R)-2-phosphoglycerate. Glu-211 functions as the Proton donor in the catalytic mechanism. Residues Asp-252, Glu-314, and Asp-341 each contribute to the Mg(2+) site. The (2R)-2-phosphoglycerate site is built by Lys-366, Arg-395, Ser-396, and Lys-417. The Proton acceptor role is filled by Lys-366.

Belongs to the enolase family. Mg(2+) is required as a cofactor.

Its subcellular location is the cytoplasm. The protein resides in the secreted. The protein localises to the cell surface. It carries out the reaction (2R)-2-phosphoglycerate = phosphoenolpyruvate + H2O. It functions in the pathway carbohydrate degradation; glycolysis; pyruvate from D-glyceraldehyde 3-phosphate: step 4/5. In terms of biological role, catalyzes the reversible conversion of 2-phosphoglycerate (2-PG) into phosphoenolpyruvate (PEP). It is essential for the degradation of carbohydrates via glycolysis. This Metamycoplasma arthritidis (strain 158L3-1) (Mycoplasma arthritidis) protein is Enolase.